The chain runs to 32 residues: Photosystem II reaction center protein T (32 aa).

The residue at position 1 (Met1) is an N-formylmethionine. Residues 1–2 lie on the Lumenal side of the membrane; it reads ME. Residues 3-23 traverse the membrane as a helical segment; sequence TITYVFIFACIIALFFFAIFF. The Cytoplasmic portion of the chain corresponds to 24 to 32; it reads REPPRITKK.

The protein belongs to the PsbT family. In terms of assembly, PSII is composed of 1 copy each of membrane proteins PsbA, PsbB, PsbC, PsbD, PsbE, PsbF, PsbH, PsbI, PsbJ, PsbK, PsbL, PsbM, PsbT, PsbX, PsbY, PsbZ, Psb30/Ycf12, PsbO, CyanoQ (PsbQ), PsbU, PsbV and a large number of cofactors. It forms dimeric complexes. Part of a photosystem II (PSII) assembly intermediate complex PSII-I; crystallized from a strain deleted of psbJ, it forms monomeric PSII before addition of the oxygen evolving complex. PSII-I includes 3 assembly factors not found in mature PSII (Psb27, Psb28 and Psb34). PSII binds multiple chlorophylls, carotenoids and specific lipids. serves as cofactor.

The protein localises to the cellular thylakoid membrane. Found at the monomer-monomer interface of the photosystem II (PS II) dimer, plays a role in assembly and dimerization of PSII. PSII is a light-driven water plastoquinone oxidoreductase, using light energy to abstract electrons from H(2)O, generating a proton gradient subsequently used for ATP formation. This is Photosystem II reaction center protein T from Thermosynechococcus vestitus (strain NIES-2133 / IAM M-273 / BP-1).